The chain runs to 288 residues: Mortality factor 4-like protein 2 (288 aa).

The span at 1 to 15 (MSSRKQGSQPRGQQS) shows a compositional bias: polar residues. Positions 1–113 (MSSRKQGSQP…RADPTVESEE (113 aa)) are disordered. A Phosphoserine modification is found at S71. Residues 117-288 (NRMEVKVKIP…ASAEYHRKAL (172 aa)) form the MRG domain.

As to quaternary structure, component of the NuA4 histone acetyltransferase complex which contains the catalytic subunit KAT5/TIP60 and the subunits EP400, TRRAP/PAF400, BRD8/SMAP, EPC1, DMAP1/DNMAP1, RUVBL1/TIP49, RUVBL2, ING3, actin, ACTL6A/BAF53A, MORF4L1/MRG15, MORF4L2/MRGX, MRGBP, YEATS4/GAS41 and VPS72/YL1. The NuA4 complex interacts with MYC and the adenovirus E1A protein. MORF4L1 may also participate in the formation of NuA4 related complexes which lack the KAT5/TIP60 catalytic subunit, but which include the SWI/SNF related protein SRCAP. Component of the MSIN3A histone deacetylase complex, which includes SIN3A, HDAC2, ARID4B, MORF4L1, RBBP4/RbAp48, and RBBP7/RbAp46. Interacts with MRFAP1 and RB1. May also interact with one or more as yet undefined members of the TLE (transducin-like enhancer of split) family of transcriptional repressors.

The protein localises to the nucleus. In terms of biological role, component of the NuA4 histone acetyltransferase complex which is involved in transcriptional activation of select genes principally by acetylation of nucleosomal histone H4 and H2A. This modification may both alter nucleosome - DNA interactions and promote interaction of the modified histones with other proteins which positively regulate transcription. This complex may be required for the activation of transcriptional programs associated with oncogene and proto-oncogene mediated growth induction, tumor suppressor mediated growth arrest and replicative senescence, apoptosis, and DNA repair. The NuA4 complex ATPase and helicase activities seem to be, at least in part, contributed by the association of RUVBL1 and RUVBL2 with EP400. NuA4 may also play a direct role in DNA repair when directly recruited to sites of DNA damage. Also a component of the MSIN3A complex which acts to repress transcription by deacetylation of nucleosomal histones. In Macaca fascicularis (Crab-eating macaque), this protein is Mortality factor 4-like protein 2 (MORF4L2).